Consider the following 154-residue polypeptide: Transcriptional repressor NrdR (154 aa).

A zinc finger lies at 3-34 (CPFCAHPDTRVADSRLMEERNAVRRRRHCPNC). In terms of domain architecture, ATP-cone spans 49-139 (PAVIGPDKKR…LHKRFDNPAD (91 aa)).

This sequence belongs to the NrdR family. Requires Zn(2+) as cofactor.

Its function is as follows. Negatively regulates transcription of bacterial ribonucleotide reductase nrd genes and operons by binding to NrdR-boxes. The sequence is that of Transcriptional repressor NrdR from Neisseria meningitidis serogroup B (strain ATCC BAA-335 / MC58).